We begin with the raw amino-acid sequence, 216 residues long: Trypsin inhibitor A (216 aa).

The first 24 residues, Met1–Ala24, serve as a signal peptide directing secretion. Intrachain disulfides connect Cys63-Cys110 and Cys160-Cys169. A propeptide spanning residues Ala206–Glu216 is cleaved from the precursor.

Belongs to the protease inhibitor I3 (leguminous Kunitz-type inhibitor) family.

Functionally, inhibition of trypsin. This Glycine max (Soybean) protein is Trypsin inhibitor A (KTI3).